The following is a 275-amino-acid chain: Methylthioribulose-1-phosphate dehydratase (275 aa).

Residue Cys125 participates in substrate binding. Residues His143 and His145 each coordinate Zn(2+). Glu168 serves as the catalytic Proton donor/acceptor. His233 serves as a coordination point for Zn(2+).

The protein belongs to the aldolase class II family. MtnB subfamily. Zn(2+) is required as a cofactor.

It is found in the cytoplasm. It carries out the reaction 5-(methylsulfanyl)-D-ribulose 1-phosphate = 5-methylsulfanyl-2,3-dioxopentyl phosphate + H2O. It participates in amino-acid biosynthesis; L-methionine biosynthesis via salvage pathway; L-methionine from S-methyl-5-thio-alpha-D-ribose 1-phosphate: step 2/6. Its function is as follows. Catalyzes the dehydration of methylthioribulose-1-phosphate (MTRu-1-P) into 2,3-diketo-5-methylthiopentyl-1-phosphate (DK-MTP-1-P). The chain is Methylthioribulose-1-phosphate dehydratase from Lodderomyces elongisporus (strain ATCC 11503 / CBS 2605 / JCM 1781 / NBRC 1676 / NRRL YB-4239) (Yeast).